The primary structure comprises 485 residues: Adenosylhomocysteinase (485 aa).

Substrate contacts are provided by threonine 60, aspartate 146, and glutamate 208. NAD(+) is bound at residue 209 to 211 (TTT). Positions 238 and 242 each coordinate substrate. NAD(+) contacts are provided by residues asparagine 243, 272 to 277 (GYGDVG), glutamate 295, asparagine 330, 351 to 353 (IGH), and asparagine 399.

The protein belongs to the adenosylhomocysteinase family. It depends on NAD(+) as a cofactor.

Its subcellular location is the cytoplasm. The catalysed reaction is S-adenosyl-L-homocysteine + H2O = L-homocysteine + adenosine. The protein operates within amino-acid biosynthesis; L-homocysteine biosynthesis; L-homocysteine from S-adenosyl-L-homocysteine: step 1/1. Its function is as follows. May play a key role in the regulation of the intracellular concentration of adenosylhomocysteine. This chain is Adenosylhomocysteinase, found in Streptomyces avermitilis (strain ATCC 31267 / DSM 46492 / JCM 5070 / NBRC 14893 / NCIMB 12804 / NRRL 8165 / MA-4680).